Reading from the N-terminus, the 401-residue chain is Putative hetero-Diels-Alderase asR5 (401 aa).

An N-terminal signal peptide occupies residues 1–21; that stretch reads MRRSFLISAALGLSMSTPALA. Residues asparagine 71, asparagine 77, asparagine 240, and asparagine 334 are each glycosylated (N-linked (GlcNAc...) asparagine).

Belongs to the eupF Diels-Alderase family.

Its pathway is secondary metabolite biosynthesis; terpenoid biosynthesis. Functionally, putative hetero-Diels-Alderase; part of the gene cluster that mediates the biosynthesis of xenovulene A, an unusual meroterpenoid that has potent inhibitory effects on the human gamma-aminobutyrate A (GABAA) benzodiazepine receptor. The first step of xenovulene A biosynthesis is the biosynthesis of 3-methylorcinaldehyde performed by the non-reducing polyketide synthase aspks1. The salicylate hydroxylase asL1 then catalyzes the oxidative dearomatization of 3-methylorcinaldehyde to yield a dearomatized hydroxycyclohexadione. The 2-oxoglutarate-dependent dioxygenase asL3 further catalyzes the oxidative ring expansion to provide the first tropolone metabolite. The cytochrome P450 monooxygenase asR2 allows the synthesis of tropolone hemiacetal. In parallel, a previously unrecognised class of terpene cyclase, asR6, produces alpha-humulene from farnesylpyrophosphate (FPP). The putative Diels-Alderase asR5 probably catalyzes the formation of the tropolone-humulene skeleton by linking humulene and the polyketide moiety. Oxidative-ring contractions catalyzed by asL4 and asL6 then processively remove carbon atoms from the polyketide to yield xenovulene A. The protein is Putative hetero-Diels-Alderase asR5 of Sarocladium schorii (Acremonium strictum (strain IMI 501407)).